We begin with the raw amino-acid sequence, 524 residues long: Cytochrome P450 CYP749A22 (524 aa).

Residues 12-32 (TPILFQFLLSSLCVFLLFVFI) form a helical membrane-spanning segment. Cys-472 contributes to the heme binding site.

It belongs to the cytochrome P450 family. It depends on heme as a cofactor.

Its subcellular location is the membrane. In terms of biological role, probable heme-thiolate monooxygenase. The polypeptide is Cytochrome P450 CYP749A22 (Panax ginseng (Korean ginseng)).